The following is a 481-amino-acid chain: Zinc metalloproteinase/disintegrin (481 aa).

The signal sequence occupies residues 1–20 (MIEVLLVTICLAVFPYQGSS). Residues 21–189 (IILESGNVND…KKASQLYLTP (169 aa)) constitute a propeptide that is removed on maturation. Position 190 is a pyrrolidone carboxylic acid (Glu) (Glu-190). One can recognise a Peptidase M12B domain in the interval 197–392 (RYIKLAIVVD…DNPQCILNAP (196 aa)). 296–299 (RNTI) lines the an L-amino acid tripeptide pocket. 3 disulfide bridges follow: Cys-308–Cys-387, Cys-349–Cys-371, and Cys-351–Cys-354. His-333 is a Zn(2+) binding site. Glu-334 is a catalytic residue. Zn(2+) is bound by residues His-337 and His-343. Ser-357 is a binding site for an L-amino acid tripeptide. The propeptide occupies 393–410 (LRTDTVSTPVSGNEFLEA). The region spanning 400-481 (TPVSGNEFLE…ADCPRNGLYG (82 aa)) is the Disintegrin domain. 6 disulfide bridges follow: Cys-414–Cys-429, Cys-416–Cys-424, Cys-423–Cys-446, Cys-437–Cys-443, Cys-442–Cys-467, and Cys-455–Cys-474. The short motif at 459–461 (RGD) is the Cell attachment site element.

The protein belongs to the venom metalloproteinase (M12B) family. P-II subfamily. P-IIa sub-subfamily. In terms of assembly, monomer. The cofactor is Zn(2+). Post-translationally, the N-terminus is blocked. In terms of tissue distribution, expressed by the venom gland.

It is found in the secreted. Inhibited by EDTA and 1,10-phenanthroline. Is also inhibited by endogenous tripeptide inhibitors pyroGlu-Asn-Trp, pyroGlu-Gln-Trp, and pyroGlu-Lys-Trp. In terms of biological role, potent fibrinogenolytic protease which cleaves mainly the Aalpha chain of fibrinogen (FGA) and slightly the Bbeta (FGB) and the gamma (FGG) chains. May possess hemorrhagic activity. Compared to other SVMP, the substrate-binding pocket is relatively shallow. Is less susceptible to tripeptide inhibitors than TM-1 (AC U3KRG1) and TM-2. Inhibits platelet aggregation induced by ADP, thrombin, platelet-activating factor and collagen. Acts by inhibiting fibrinogen interaction with platelet receptors GPIIb/GPIIIa (ITGA2B/ITGB3). The protein is Zinc metalloproteinase/disintegrin of Protobothrops mucrosquamatus (Taiwan habu).